The chain runs to 249 residues: Galactan endo-beta-1,3-galactanase (249 aa).

The first 21 residues, 1–21, serve as a signal peptide directing secretion; sequence MKLFVVLACLAAPGTFPFVDA. Positions 34 to 247 constitute a GH16 domain; that stretch reads STYWNNFYPW…KARNVQVTRT (214 aa). A glycan (N-linked (GlcNAc...) asparagine) is linked at Asn48. Catalysis depends on Glu138, which acts as the Nucleophile. The Proton donor role is filled by Glu143. A glycan (N-linked (GlcNAc...) asparagine) is linked at Asn156.

Belongs to the glycosyl hydrolase 16 family. Post-translationally, N-glycosylated.

It catalyses the reaction The enzyme specifically hydrolyzes beta-1,3-galactan and beta-1,3-galactooligosaccharides.. Specifically hydrolyzes beta-1,3-galactan in an endo-fashion. Requires at least 3 contiguous beta-1,3-residues. The sequence is that of Galactan endo-beta-1,3-galactanase (EN3GAL) from Flammulina velutipes (Agaricus velutipes).